The primary structure comprises 380 residues: MVTNHLLEIENLGQSIWMDNLSRNIIESGELKSMIGKKGIRGITSNPAIFEKAIAGNAIYDADIEAGIKASKSVIEIYESLVFKDIRDACDIFMPVYEETKGLDGYISIEVPPTIAKDTESTISEAIRYYTAIGRENLMIKIPGTPEGLPAVTRVISEGINVNVTLLFSVESYINTAWAYIEGLEARAAKGEDIDKIASVASFFLSRIDSNIDGLIDEKLKKVTDETVKAKLEAVKGKVAIANAKIAYQEYKKIIQSDRWKALSAKGAKEQRLLWASTSTKNPAYSDVMYVDELIGPNTVNTLPPPTIDACADHCDVDNRVETNIEVTKEVMENLKDPDININIDQVMEQLLVEGIDKFIKPFTSLINSLEEKVKKLTPV.

The active-site Schiff-base intermediate with substrate is lysine 141.

The protein belongs to the transaldolase family. Type 2 subfamily.

Its subcellular location is the cytoplasm. The catalysed reaction is D-sedoheptulose 7-phosphate + D-glyceraldehyde 3-phosphate = D-erythrose 4-phosphate + beta-D-fructose 6-phosphate. The protein operates within carbohydrate degradation; pentose phosphate pathway; D-glyceraldehyde 3-phosphate and beta-D-fructose 6-phosphate from D-ribose 5-phosphate and D-xylulose 5-phosphate (non-oxidative stage): step 2/3. In terms of biological role, transaldolase is important for the balance of metabolites in the pentose-phosphate pathway. The protein is Transaldolase of Trichodesmium erythraeum (strain IMS101).